Consider the following 178-residue polypeptide: Acireductone dioxygenase (178 aa).

Fe(2+) contacts are provided by His-87, His-89, Glu-93, and His-132. Ni(2+) is bound by residues His-87, His-89, Glu-93, and His-132.

This sequence belongs to the acireductone dioxygenase (ARD) family. The cofactor is Fe(2+). Ni(2+) is required as a cofactor.

It is found in the cytoplasm. Its subcellular location is the nucleus. It carries out the reaction 1,2-dihydroxy-5-(methylsulfanyl)pent-1-en-3-one + O2 = 4-methylsulfanyl-2-oxobutanoate + formate + 2 H(+). It catalyses the reaction 1,2-dihydroxy-5-(methylsulfanyl)pent-1-en-3-one + O2 = 3-(methylsulfanyl)propanoate + CO + formate + 2 H(+). It participates in amino-acid biosynthesis; L-methionine biosynthesis via salvage pathway; L-methionine from S-methyl-5-thio-alpha-D-ribose 1-phosphate: step 5/6. Catalyzes 2 different reactions between oxygen and the acireductone 1,2-dihydroxy-3-keto-5-methylthiopentene (DHK-MTPene) depending upon the metal bound in the active site. Fe-containing acireductone dioxygenase (Fe-ARD) produces formate and 2-keto-4-methylthiobutyrate (KMTB), the alpha-ketoacid precursor of methionine in the methionine recycle pathway. Ni-containing acireductone dioxygenase (Ni-ARD) produces methylthiopropionate, carbon monoxide and formate, and does not lie on the methionine recycle pathway. In Candida albicans (strain SC5314 / ATCC MYA-2876) (Yeast), this protein is Acireductone dioxygenase.